The following is a 148-amino-acid chain: Truncated transcription factor CAULIFLOWER C (148 aa).

The region spanning 1–61 is the MADS-box domain; that stretch reads MGRGRVEMKR…GKLFEYSSES (61 aa). A K-box; partial domain is found at 90 to 148; sequence QTNWSMEYSRLKAKIELWERNQRHYLGEDLESISIKELQNLEQQLDTSLKHIPSRKVCK.

Homodimer capable of binding to CArG-box sequences.

Its subcellular location is the nucleus. Probable transcription factor that promotes early floral meristem identity in synergy with APETALA1, FRUITFULL and LEAFY. Is required subsequently for the transition of an inflorescence meristem into a floral meristem. Seems to be partially redundant to the function of APETALA1. In Brassica oleracea var. botrytis (Cauliflower), this protein is Truncated transcription factor CAULIFLOWER C (CAL-C).